Here is a 496-residue protein sequence, read N- to C-terminus: GTPase Der (496 aa).

EngA-type G domains lie at 3 to 166 (PVVA…FDNL) and 208 to 381 (IKLA…RSAT). GTP contacts are provided by residues 9–16 (GRPNVGKS), 56–60 (DTGGI), 118–121 (NKVD), 214–221 (GRPNVGKS), 261–265 (DTAGV), and 326–329 (NKWD). The KH-like domain maps to 382–466 (TRVGTSVLTR…PIRIQFQNSD (85 aa)).

The protein belongs to the TRAFAC class TrmE-Era-EngA-EngB-Septin-like GTPase superfamily. EngA (Der) GTPase family. In terms of assembly, associates with the 50S ribosomal subunit.

GTPase that plays an essential role in the late steps of ribosome biogenesis. In Vibrio vulnificus (strain YJ016), this protein is GTPase Der.